The following is a 266-amino-acid chain: Orcokinin peptides type B (266 aa).

The N-terminal stretch at 1-20 (MTAQMFTIALLLSLSAIAAA) is a signal peptide. 3 propeptides span residues 21–46 (GTIK…GAPV), 240–246 (DYDVFPD), and 264–266 (NVE).

The protein belongs to the orcokinin family.

It is found in the secreted. Its function is as follows. Myotropic peptides that enhance both the frequency and amplitude of spontaneous hindgut contractions. This Procambarus clarkii (Red swamp crayfish) protein is Orcokinin peptides type B.